The chain runs to 502 residues: Ribose import ATP-binding protein RbsA (502 aa).

ABC transporter domains are found at residues 6 to 242 (IDMT…IARD) and 253 to 496 (ALGA…SGAR). 38–45 (GQNGAGKS) lines the ATP pocket.

This sequence belongs to the ABC transporter superfamily. Ribose importer (TC 3.A.1.2.1) family. As to quaternary structure, the complex is composed of an ATP-binding protein (RbsA), two transmembrane proteins (RbsC) and a solute-binding protein (RbsB).

It is found in the cell inner membrane. The catalysed reaction is D-ribose(out) + ATP + H2O = D-ribose(in) + ADP + phosphate + H(+). Functionally, part of the ABC transporter complex RbsABC involved in ribose import. Responsible for energy coupling to the transport system. In Cereibacter sphaeroides (strain ATCC 17023 / DSM 158 / JCM 6121 / CCUG 31486 / LMG 2827 / NBRC 12203 / NCIMB 8253 / ATH 2.4.1.) (Rhodobacter sphaeroides), this protein is Ribose import ATP-binding protein RbsA.